We begin with the raw amino-acid sequence, 141 residues long: Nucleoside diphosphate kinase (141 aa).

Residues K11, F59, R87, T93, R104, and N114 each contribute to the ATP site. H117 (pros-phosphohistidine intermediate) is an active-site residue.

Belongs to the NDK family. In terms of assembly, homotetramer. Requires Mg(2+) as cofactor.

It is found in the cytoplasm. The catalysed reaction is a 2'-deoxyribonucleoside 5'-diphosphate + ATP = a 2'-deoxyribonucleoside 5'-triphosphate + ADP. It carries out the reaction a ribonucleoside 5'-diphosphate + ATP = a ribonucleoside 5'-triphosphate + ADP. Its function is as follows. Major role in the synthesis of nucleoside triphosphates other than ATP. The ATP gamma phosphate is transferred to the NDP beta phosphate via a ping-pong mechanism, using a phosphorylated active-site intermediate. This chain is Nucleoside diphosphate kinase, found in Pseudomonas entomophila (strain L48).